Consider the following 120-residue polypeptide: Small ribosomal subunit protein uS13 (120 aa).

Positions 93-120 are disordered; sequence RKGLPVRGQTTKNNARTRKGKKKTVGSK. Basic residues predominate over residues 107-120; sequence ARTRKGKKKTVGSK.

The protein belongs to the universal ribosomal protein uS13 family. In terms of assembly, part of the 30S ribosomal subunit. Forms a loose heterodimer with protein S19. Forms two bridges to the 50S subunit in the 70S ribosome.

Functionally, located at the top of the head of the 30S subunit, it contacts several helices of the 16S rRNA. In the 70S ribosome it contacts the 23S rRNA (bridge B1a) and protein L5 of the 50S subunit (bridge B1b), connecting the 2 subunits; these bridges are implicated in subunit movement. Contacts the tRNAs in the A and P-sites. This is Small ribosomal subunit protein uS13 from Helicobacter pylori (strain P12).